Reading from the N-terminus, the 272-residue chain is MSLPILSTTYAAENTVPASKSTYVVKNLNIGDLPVKTLVPITAKTREQALAQAKVIAENKDADIAEFRIDLLEFASDTKKVIALGQELNQILKDKPLLATIRTSNEGGKLKVTDQEYEKIYSEYLKKPFMQLLDIEMFRDQAAVAKLTKLAHQKKVLVVMSNHDFDKTPSEQEIVSRLLKQDQMGADILKIAVMPKSKQDVFTLMNATLKVSEQSTKPLLTMSMGRLGTISRIATANMGGSLSFGMIGEASAPGQIDVTALKQFLKTVQPTP.

3-dehydroquinate contacts are provided by residues 66–68 and R102; that span reads EFR. The active-site Proton donor/acceptor is the H163. K190 acts as the Schiff-base intermediate with substrate in catalysis. 3-dehydroquinate is bound by residues R232, S251, and Q255.

The protein belongs to the type-I 3-dehydroquinase family.

It catalyses the reaction 3-dehydroquinate = 3-dehydroshikimate + H2O. It participates in aromatic compound metabolism; 3,4-dihydroxybenzoate biosynthesis; 3,4-dihydroxybenzoate from 3-dehydroquinate: step 1/2. Involved in the biosynthesis of protocatechuate. Catalyzes the catabolic dehydration of 3-dehydroquinate (DHQ) to yield 3-dehydroshikimate. The protein is Catabolic 3-dehydroquinate dehydratase of Acinetobacter baylyi (strain ATCC 33305 / BD413 / ADP1).